Here is a 130-residue protein sequence, read N- to C-terminus: Small ribosomal subunit protein uS8 (130 aa).

This sequence belongs to the universal ribosomal protein uS8 family. In terms of assembly, part of the 30S ribosomal subunit. Contacts proteins S5 and S12.

Functionally, one of the primary rRNA binding proteins, it binds directly to 16S rRNA central domain where it helps coordinate assembly of the platform of the 30S subunit. The polypeptide is Small ribosomal subunit protein uS8 (Cellvibrio japonicus (strain Ueda107) (Pseudomonas fluorescens subsp. cellulosa)).